A 103-amino-acid chain; its full sequence is Viscotoxin-B (103 aa).

An N-terminal signal peptide occupies residues 1 to 6 (FRNVES). 3 disulfides stabilise this stretch: Cys9-Cys46, Cys10-Cys38, and Cys22-Cys32. Positions 53–103 (FYCTLGCQSSKCASITTPPNSEVDAEAVRCKAACSNLCDFGVTTNQEIQDD) are cleaved as a propeptide — acidic domain.

This sequence belongs to the plant thionin (TC 1.C.44) family.

It is found in the secreted. Functionally, thionins are small plant proteins which are toxic to animal cells. They seem to exert their toxic effect at the level of the cell membrane. Their precise function is not known. This is Viscotoxin-B (THI2.2) from Viscum album (European mistletoe).